Reading from the N-terminus, the 161-residue chain is Large ribosomal subunit protein uL30m (161 aa).

A mitochondrion-targeting transit peptide spans 1–34; it reads MAGILRSIVQRPPGRLQTATKGVEPLVCVDWIRH.

It belongs to the universal ribosomal protein uL30 family. As to quaternary structure, component of the mitochondrial ribosome large subunit (39S) which comprises a 16S rRNA and about 50 distinct proteins.

The protein resides in the mitochondrion. The chain is Large ribosomal subunit protein uL30m (MRPL30) from Bos taurus (Bovine).